The chain runs to 446 residues: tRNA-2-methylthio-N(6)-dimethylallyladenosine synthase (446 aa).

The 117-residue stretch at 5-121 (KYLYVETFGC…LPEIVRAAER (117 aa)) folds into the MTTase N-terminal domain. 6 residues coordinate [4Fe-4S] cluster: C14, C50, C84, C159, C163, and C166. Residues 145–375 (GEGGVTRFVT…QTLQQQMKRE (231 aa)) enclose the Radical SAM core domain. The 63-residue stretch at 378–440 (ISFVGTRQLV…QNSLLGEIVT (63 aa)) folds into the TRAM domain.

Belongs to the methylthiotransferase family. MiaB subfamily. As to quaternary structure, monomer. Requires [4Fe-4S] cluster as cofactor.

It is found in the cytoplasm. It catalyses the reaction N(6)-dimethylallyladenosine(37) in tRNA + (sulfur carrier)-SH + AH2 + 2 S-adenosyl-L-methionine = 2-methylsulfanyl-N(6)-dimethylallyladenosine(37) in tRNA + (sulfur carrier)-H + 5'-deoxyadenosine + L-methionine + A + S-adenosyl-L-homocysteine + 2 H(+). Its function is as follows. Catalyzes the methylthiolation of N6-(dimethylallyl)adenosine (i(6)A), leading to the formation of 2-methylthio-N6-(dimethylallyl)adenosine (ms(2)i(6)A) at position 37 in tRNAs that read codons beginning with uridine. This Geobacter sulfurreducens (strain ATCC 51573 / DSM 12127 / PCA) protein is tRNA-2-methylthio-N(6)-dimethylallyladenosine synthase.